The primary structure comprises 291 residues: Sulfotransferase 1A1 (291 aa).

Residue 44–49 (KSGTTW) participates in 3'-phosphoadenylyl sulfate binding. Residue 102-104 (KTH) participates in substrate binding. Catalysis depends on His104, which acts as the Proton acceptor. 3'-phosphoadenylyl sulfate is bound by residues Arg126, Ser134, Tyr189, 223–228 (TSFKKM), and 251–255 (FMRKG). At Ser134 the chain carries Phosphoserine.

Belongs to the sulfotransferase 1 family. In terms of assembly, homodimer. In terms of processing, the N-terminus is blocked. As to expression, liver, kidney, heart and colon.

It is found in the cytoplasm. The catalysed reaction is a phenol + 3'-phosphoadenylyl sulfate = an aryl sulfate + adenosine 3',5'-bisphosphate + H(+). It carries out the reaction 17beta-estradiol + 3'-phosphoadenylyl sulfate = 17beta-estradiol 3-sulfate + adenosine 3',5'-bisphosphate + H(+). The enzyme catalyses 4-ethylphenol + 3'-phosphoadenylyl sulfate = 4-ethylphenyl sulfate + adenosine 3',5'-bisphosphate + H(+). It catalyses the reaction 4-nitrophenol + 3'-phosphoadenylyl sulfate = 4-nitrophenyl sulfate + adenosine 3',5'-bisphosphate. The catalysed reaction is dopamine + 3'-phosphoadenylyl sulfate = dopamine 3-O-sulfate + adenosine 3',5'-bisphosphate + H(+). It carries out the reaction dopamine + 3'-phosphoadenylyl sulfate = dopamine 4-O-sulfate + adenosine 3',5'-bisphosphate + H(+). The enzyme catalyses 3,3',5-triiodo-L-thyronine + 3'-phosphoadenylyl sulfate = 3,3',5-triiodo-L-thyronine sulfate + adenosine 3',5'-bisphosphate + H(+). It catalyses the reaction 3,3',5'-triiodo-L-thyronine + 3'-phosphoadenylyl sulfate = 3,3',5'-triiodo-L-thyronine sulfate + adenosine 3',5'-bisphosphate + H(+). The catalysed reaction is 3,3'-diiodo-L-thyronine + 3'-phosphoadenylyl sulfate = 3,3'-diiodo-L-thyronine sulfate + adenosine 3',5'-bisphosphate + H(+). It carries out the reaction L-thyroxine + 3'-phosphoadenylyl sulfate = L-thyroxine sulfate + adenosine 3',5'-bisphosphate + H(+). Its function is as follows. Sulfotransferase that utilizes 3'-phospho-5'-adenylyl sulfate (PAPS) as sulfonate donor to catalyze the sulfate conjugation of a wide variety of acceptor molecules bearing a hydroxyl or an amine group. Sulfonation increases the water solubility of most compounds, and therefore their renal excretion, but it can also result in bioactivation to form active metabolites. Displays broad substrate specificity for small phenolic compounds. Plays an important roles in the sulfonation of endogenous molecules such as steroid hormones. Mediates the sulfate conjugation of a variety of xenobiotics, including the drugs acetaminophen and minoxidil. Mediates also the metabolic activation of carcinogenic N-hydroxyarylamines leading to highly reactive intermediates capable of forming DNA adducts, potentially resulting in mutagenesis. May play a role in gut microbiota-host metabolic interaction. O-sulfonates 4-ethylphenol (4-EP), a dietary tyrosine-derived metabolite produced by gut bacteria. The product 4-EPS crosses the blood-brain barrier and may negatively regulate oligodendrocyte maturation and myelination, affecting the functional connectivity of different brain regions associated with the limbic system. Catalyzes the sulfate conjugation of dopamine. Catalyzes the sulfation of T4 (L-thyroxine/3,5,3',5'-tetraiodothyronine), T3 (3,5,3'-triiodothyronine), rT3 (3,3',5'-triiodothyronine) and 3,3'-T2 (3,3'-diiodothyronine), with a substrate preference of 3,3'-T2 &gt; rT3 &gt; T3 &gt; T4. This chain is Sulfotransferase 1A1 (Sult1a1), found in Rattus norvegicus (Rat).